The following is a 345-amino-acid chain: Ubiquitin-associated domain-containing protein 2 (345 aa).

The N-terminal stretch at 1–39 (MFTSTGSSGLYKAPLSKSLLLVPSALSLLLTLLLPHCQK) is a signal peptide. Topologically, residues 40 to 91 (FFVYDLHAVKHDLQIWRLICGRIICLDLKDAFCSGLLIYNFRIFERRYGSRK) are extracellular. The helical transmembrane segment at 92-112 (FASFLLGSWVLSALFDFILVE) threads the bilayer. Topologically, residues 113–125 (AVQYSLGVTVASN) are cytoplasmic. The chain crosses the membrane as a helical span at residues 126 to 146 (LPSGFLAPVFALFVPFHCSIP). Residues 147-163 (RVQVAQILGPLSITNKT) lie on the Extracellular side of the membrane. Residue N161 is glycosylated (N-linked (GlcNAc...) asparagine). A helical membrane pass occupies residues 164-184 (LIYILGLQLFTSGSYIWIVAM). At 185–345 (SGLISGMCYD…NVATNFLLQH (161 aa)) the chain is on the cytoplasmic side. A disordered region spans residues 287–306 (NINYQDGPRSEQRASPPLEV). The UBA domain maps to 305–345 (EVSEEQVARLMEMGFSRGDALEALRASNNDLNVATNFLLQH).

Interacts with LMBR1L, FAF2, AMFR and VCP.

The protein resides in the endoplasmic reticulum membrane. In terms of biological role, restricts trafficking of FAF2 from the endoplasmic reticulum to lipid droplets. In association with LMBR1L and E3 ubiquitin-protein ligase AMFR, negatively regulates the canonical Wnt signaling pathway in the lymphocytes by promoting the ubiquitin-mediated degradation of CTNNB1 and Wnt receptors FZD6 and LRP6. The sequence is that of Ubiquitin-associated domain-containing protein 2 (Ubac2) from Mus musculus (Mouse).